A 167-amino-acid chain; its full sequence is Translationally-controlled tumor protein homolog (167 aa).

A TCTP domain is found at 1 to 167 (MKLFTDIISN…WKDGLRETKI (167 aa)).

Belongs to the TCTP family.

Its subcellular location is the cytoplasm. The protein localises to the cytoskeleton. Its function is as follows. Involved in protein synthesis. Involved in microtubule stabilization. The polypeptide is Translationally-controlled tumor protein homolog (Mycosarcoma maydis (Corn smut fungus)).